A 556-amino-acid chain; its full sequence is Small ribosomal subunit protein uS3m (556 aa).

The protein belongs to the universal ribosomal protein uS3 family. Component of the mitochondrial ribosome small subunit.

The protein resides in the mitochondrion. This is Small ribosomal subunit protein uS3m (RPS3) from Arabidopsis thaliana (Mouse-ear cress).